The sequence spans 303 residues: Foldase protein PrsA (303 aa).

An N-terminal signal peptide occupies residues 1 to 20 (MMKKWLLAAASLLMVVTLAG). C21 carries N-palmitoyl cysteine lipidation. C21 carries the S-diacylglycerol cysteine lipid modification. In terms of domain architecture, PpiC spans 137-233 (EPKVEVQHIL…YGYHVIRMIK (97 aa)).

This sequence belongs to the PrsA family.

The protein localises to the cell membrane. The catalysed reaction is [protein]-peptidylproline (omega=180) = [protein]-peptidylproline (omega=0). Its function is as follows. Plays a major role in protein secretion by helping the post-translocational extracellular folding of several secreted proteins. The protein is Foldase protein PrsA of Latilactobacillus sakei subsp. sakei (strain 23K) (Lactobacillus sakei subsp. sakei).